The primary structure comprises 329 residues: Phosphate import ATP-binding protein PstB (329 aa).

Positions 83-325 constitute an ABC transporter domain; that stretch reads FEIENLNFWY…PKQKETNRYI (243 aa). Residue 116 to 123 participates in ATP binding; it reads GKSGCGKS.

It belongs to the ABC transporter superfamily. Phosphate importer (TC 3.A.1.7) family. As to quaternary structure, the complex is composed of two ATP-binding proteins (PstB), two transmembrane proteins (PstC and PstA) and a solute-binding protein (PstS).

The protein localises to the cell membrane. The enzyme catalyses phosphate(out) + ATP + H2O = ADP + 2 phosphate(in) + H(+). In terms of biological role, part of the ABC transporter complex PstSACB involved in phosphate import. Responsible for energy coupling to the transport system. The protein is Phosphate import ATP-binding protein PstB of Mycoplasma pneumoniae (strain ATCC 29342 / M129 / Subtype 1) (Mycoplasmoides pneumoniae).